Reading from the N-terminus, the 58-residue chain is Large ribosomal subunit protein bL32 (58 aa).

Belongs to the bacterial ribosomal protein bL32 family.

The chain is Large ribosomal subunit protein bL32 from Prochlorococcus marinus (strain MIT 9303).